We begin with the raw amino-acid sequence, 471 residues long: Soluble pyridine nucleotide transhydrogenase (471 aa).

Glutamate 41–cysteine 50 contributes to the FAD binding site.

This sequence belongs to the class-I pyridine nucleotide-disulfide oxidoreductase family. The cofactor is FAD.

The protein resides in the cytoplasm. The enzyme catalyses NAD(+) + NADPH = NADH + NADP(+). Its function is as follows. Conversion of NADPH, generated by peripheral catabolic pathways, to NADH, which can enter the respiratory chain for energy generation. In Aliivibrio fischeri (strain ATCC 700601 / ES114) (Vibrio fischeri), this protein is Soluble pyridine nucleotide transhydrogenase.